A 191-amino-acid chain; its full sequence is Crossover junction endodeoxyribonuclease RuvC (191 aa).

Residues D7, E67, and D141 contribute to the active site. Mg(2+) contacts are provided by D7, E67, and D141.

The protein belongs to the RuvC family. In terms of assembly, homodimer which binds Holliday junction (HJ) DNA. The HJ becomes 2-fold symmetrical on binding to RuvC with unstacked arms; it has a different conformation from HJ DNA in complex with RuvA. In the full resolvosome a probable DNA-RuvA(4)-RuvB(12)-RuvC(2) complex forms which resolves the HJ. Mg(2+) serves as cofactor.

Its subcellular location is the cytoplasm. The enzyme catalyses Endonucleolytic cleavage at a junction such as a reciprocal single-stranded crossover between two homologous DNA duplexes (Holliday junction).. In terms of biological role, the RuvA-RuvB-RuvC complex processes Holliday junction (HJ) DNA during genetic recombination and DNA repair. Endonuclease that resolves HJ intermediates. Cleaves cruciform DNA by making single-stranded nicks across the HJ at symmetrical positions within the homologous arms, yielding a 5'-phosphate and a 3'-hydroxyl group; requires a central core of homology in the junction. The consensus cleavage sequence is 5'-(A/T)TT(C/G)-3'. Cleavage occurs on the 3'-side of the TT dinucleotide at the point of strand exchange. HJ branch migration catalyzed by RuvA-RuvB allows RuvC to scan DNA until it finds its consensus sequence, where it cleaves and resolves the cruciform DNA. The sequence is that of Crossover junction endodeoxyribonuclease RuvC from Myxococcus xanthus (strain DK1622).